A 91-amino-acid polypeptide reads, in one-letter code: Non-specific lipid-transfer protein 1 (91 aa).

Disulfide bonds link Cys3-Cys50, Cys13-Cys27, Cys28-Cys73, and Cys48-Cys87. Arg44 and Tyr79 together coordinate a 1,2-diacyl-sn-glycero-3-phosphocholine.

Monomer.

Functionally, plant non-specific lipid-transfer proteins transfer phospholipids as well as galactolipids across membranes. May play a role in wax or cutin deposition in the cell walls of expanding epidermal cells and certain secretory tissues. Has antifungal activity against F.solani, F.oxysporum, P.aphanidermatum and S.rolfsii. Has antibacterial activity against the Gram-positive bacterium S.aureus but not against the Gram-negative bacterium S.typhimurium. This chain is Non-specific lipid-transfer protein 1, found in Vigna radiata var. radiata (Mung bean).